We begin with the raw amino-acid sequence, 541 residues long: Ascorbate transporter, chloroplastic (541 aa).

The N-terminal 28 residues, 1-28 (MALGGLISNRNFGSFIGSGNGCQRLGKS), are a transit peptide targeting the chloroplast. The next 11 membrane-spanning stretches (helical) occupy residues 133–155 (VIVL…MSIA), 170–190 (VGLI…LGGI), 199–219 (VVLG…PIAA), 221–241 (LGLP…GVAM), 263–283 (LVYS…PMLI), 286–306 (FGWP…FLLW), 352–372 (VWAL…LLTW), 390–410 (LLCV…GWIA), 430–450 (IGFL…TPAM), 481–501 (AGVL…FGTA), and 515–535 (VFKV…LFAT).

The protein belongs to the major facilitator superfamily. Sodium/anion cotransporter (TC 2.A.1.14) family. In terms of tissue distribution, expressed in stems, developing siliques, leaf mesophyll cells and sepals of mature flowers. Not detected in roots. Detected in palisade tissue rather than spongy tissue from the leaves.

It localises to the plastid. Its subcellular location is the chloroplast inner membrane. Its activity is regulated as follows. Insensitive to dehydroascorbate, p-isoascorbate, inorganic phosphate, glutamate, ATP, p-aminohippuric acid or tetraethylammonium. Its function is as follows. Inorganic phosphate and probable anion transporter. Ascorbate transporter bridging the chloroplast envelope. Transports ascorbate from the cytosol into the chloroplast. Requires chloride ions and the presence of an electrochemical potential across the membrane for activity. The polypeptide is Ascorbate transporter, chloroplastic (PHT4;4) (Arabidopsis thaliana (Mouse-ear cress)).